A 292-amino-acid polypeptide reads, in one-letter code: 4-hydroxy-tetrahydrodipicolinate synthase (292 aa).

Threonine 45 contributes to the pyruvate binding site. Tyrosine 133 serves as the catalytic Proton donor/acceptor. Catalysis depends on lysine 161, which acts as the Schiff-base intermediate with substrate. Isoleucine 203 is a pyruvate binding site.

It belongs to the DapA family. Homotetramer; dimer of dimers.

The protein localises to the cytoplasm. The catalysed reaction is L-aspartate 4-semialdehyde + pyruvate = (2S,4S)-4-hydroxy-2,3,4,5-tetrahydrodipicolinate + H2O + H(+). It functions in the pathway amino-acid biosynthesis; L-lysine biosynthesis via DAP pathway; (S)-tetrahydrodipicolinate from L-aspartate: step 3/4. Its function is as follows. Catalyzes the condensation of (S)-aspartate-beta-semialdehyde [(S)-ASA] and pyruvate to 4-hydroxy-tetrahydrodipicolinate (HTPA). This chain is 4-hydroxy-tetrahydrodipicolinate synthase, found in Salmonella arizonae (strain ATCC BAA-731 / CDC346-86 / RSK2980).